Here is a 261-residue protein sequence, read N- to C-terminus: MIVSEPLLRVENLSKTYPNGVQALKNINLEVHPGEFLVVIGLSGSGKSTLLRCLNRLQEPTSGNIYFSGQEIGQVQDAEKIRSVRSKMAMIFQHFNLIPRQSVLKNVLMGRLAAKSTWQSLWGMFSDAERIEAKENLRLVGIAEKASLRADQLSGGQKQRVAIARALMQKPVLLLADEPVSSLDPATCHVVMDYLRRINQEMGITVIANLHFLSLVRKYATRVVALKDGEIVFRGKPEEITEEWFRRIYGEGAQDVAPNDI.

The ABC transporter domain occupies 8–253 (LRVENLSKTY…WFRRIYGEGA (246 aa)). Position 41–48 (41–48 (GLSGSGKS)) interacts with ATP.

It belongs to the ABC transporter superfamily. Phosphonates importer (TC 3.A.1.9.1) family. As to quaternary structure, the complex is composed of two ATP-binding proteins (PhnC), two transmembrane proteins (PhnE) and a solute-binding protein (PhnD).

It localises to the cell inner membrane. The enzyme catalyses phosphonate(out) + ATP + H2O = phosphonate(in) + ADP + phosphate + H(+). Functionally, part of the ABC transporter complex PhnCDE involved in phosphonates import. Responsible for energy coupling to the transport system. The chain is Phosphonates import ATP-binding protein PhnC from Bdellovibrio bacteriovorus (strain ATCC 15356 / DSM 50701 / NCIMB 9529 / HD100).